We begin with the raw amino-acid sequence, 427 residues long: Terminal nucleotidyltransferase 5B (427 aa).

Residues 1-11 show a composition bias toward acidic residues; that stretch reads MMPSESGDESL. The tract at residues 1-46 is disordered; sequence MMPSESGDESLEQPAAQVGTGAASAVATAGAAGGGPDLEASSASLG. A compositionally biased stretch (low complexity) spans 15 to 30; it reads AAQVGTGAASAVATAG.

The protein belongs to the TENT family.

Its subcellular location is the cytoplasm. It localises to the nucleus. It catalyses the reaction RNA(n) + ATP = RNA(n)-3'-adenine ribonucleotide + diphosphate. Catalyzes the transfer of one adenosine molecule from an ATP to an mRNA poly(A) tail bearing a 3'-OH terminal group in an ATP hydrolysis-dependent manner. May be involved in maintaining the translation efficiency of at least some genes through preventing degradation of their mRNAs. Prefers RNA molecules that are adenosine-rich close to 3'-end. In addition, may inhibit cell proliferation and cell cycle progression through ubiquitination of beta-catenin/CTNNB1. This Rattus norvegicus (Rat) protein is Terminal nucleotidyltransferase 5B.